Here is a 432-residue protein sequence, read N- to C-terminus: Alpha-2 adrenergic receptor (432 aa).

Residues Met1 to Ile32 lie on the Extracellular side of the membrane. Residues Asn5 and Asn18 are each glycosylated (N-linked (GlcNAc...) asparagine). The helical transmembrane segment at Ala33–Val57 threads the bilayer. Over Leu58–Leu69 the chain is Cytoplasmic. The helical transmembrane segment at Phe70–Met95 threads the bilayer. Residues Gly96 to Cys105 are Extracellular-facing. A disulfide bridge links Cys105 with Cys183. Residues Gly106–Leu128 form a helical membrane-spanning segment. Residues Asp129 to Val149 are Cytoplasmic-facing. Residues Lys150–Asp172 traverse the membrane as a helical segment. At Ser173 to Asp188 the chain is on the extracellular side. The chain crosses the membrane as a helical span at residues Thr189–Ile212. Residues Arg213 to Val356 are Cytoplasmic-facing. Residues Thr222–Ser319 are disordered. 2 stretches are compositionally biased toward polar residues: residues Val235–Asn246 and Ser265–Thr275. The segment covering Gly288–Arg300 has biased composition (basic and acidic residues). The span at Ser309–Ser319 shows a compositional bias: polar residues. A helical transmembrane segment spans residues Leu357–Val380. At Cys381 to Lys393 the chain is on the extracellular side. A helical membrane pass occupies residues Phe394–Asn413. The Cytoplasmic segment spans residues Arg414–Phe432.

This sequence belongs to the G-protein coupled receptor 1 family.

It is found in the cell membrane. In terms of biological role, alpha-2 adrenergic receptors mediate the catecholamine-induced inhibition of adenylate cyclase through the action of G proteins. The polypeptide is Alpha-2 adrenergic receptor (Labrus ossifagus (Cuckoo wrasse)).